The chain runs to 24 residues: Humanin-like 6 (24 aa).

This sequence belongs to the humanin family. In terms of tissue distribution, expressed in skeletal muscle and testis.

It is found in the secreted. Its subcellular location is the cytoplasm. Its function is as follows. Plays a role as a neuroprotective and antiapoptotic factor. The chain is Humanin-like 6 from Homo sapiens (Human).